The following is a 105-amino-acid chain: Large ribosomal subunit protein uL24 (105 aa).

Belongs to the universal ribosomal protein uL24 family. In terms of assembly, part of the 50S ribosomal subunit.

Functionally, one of two assembly initiator proteins, it binds directly to the 5'-end of the 23S rRNA, where it nucleates assembly of the 50S subunit. In terms of biological role, one of the proteins that surrounds the polypeptide exit tunnel on the outside of the subunit. The protein is Large ribosomal subunit protein uL24 of Nitrosomonas europaea (strain ATCC 19718 / CIP 103999 / KCTC 2705 / NBRC 14298).